Here is a 132-residue protein sequence, read N- to C-terminus: ATP synthase epsilon chain (132 aa).

This sequence belongs to the ATPase epsilon chain family. F-type ATPases have 2 components, CF(1) - the catalytic core - and CF(0) - the membrane proton channel. CF(1) has five subunits: alpha(3), beta(3), gamma(1), delta(1), epsilon(1). CF(0) has three main subunits: a, b and c.

It localises to the cell membrane. Produces ATP from ADP in the presence of a proton gradient across the membrane. The sequence is that of ATP synthase epsilon chain from Brevibacillus brevis (strain 47 / JCM 6285 / NBRC 100599).